Reading from the N-terminus, the 334-residue chain is Transcription initiation factor IIB (334 aa).

The TFIIB-type zinc-finger motif lies at T34–D65. Zn(2+) contacts are provided by C38, C41, C57, and C60. Tandem repeats lie at residues S151–L234 and D245–E326.

It belongs to the TFIIB family.

Functionally, stabilizes TBP binding to an archaeal box-A promoter. Also responsible for recruiting RNA polymerase II to the pre-initiation complex (DNA-TBP-TFIIB). In Methanoregula boonei (strain DSM 21154 / JCM 14090 / 6A8), this protein is Transcription initiation factor IIB.